The primary structure comprises 482 residues: Wax ester synthase/diacylglycerol acyltransferase 9 (482 aa).

At 1 to 195 (MEKKMKEEEE…FRLVLVVCST (195 aa)) the chain is on the cytoplasmic side. H140 acts as the Proton acceptor in catalysis. The helical transmembrane segment at 196-216 (VRLIWNTLVDSFLCMATIFFL) threads the bilayer. At 217–328 (KDTDTPLKGK…AKGSKCRWGN (112 aa)) the chain is on the lumenal side. Residues 329–349 (YISVILFPFTIALQSDPLVYL) form a helical membrane-spanning segment. At 350–366 (SNVKSMIDRKKNSLITY) the chain is on the cytoplasmic side. The chain crosses the membrane as a helical span at residues 367–387 (IIYTFSEFVIKAFGINVAVAF). Residues 388-482 (QRKIMLNTTM…LEKGLPNHVN (95 aa)) lie on the Lumenal side of the membrane. Residue N394 is glycosylated (N-linked (GlcNAc...) asparagine).

In the N-terminal section; belongs to the long-chain O-acyltransferase family. Mostly expressed in stems and siliques.

The protein localises to the cell membrane. It is found in the endoplasmic reticulum membrane. The enzyme catalyses an acyl-CoA + a 1,2-diacyl-sn-glycerol = a triacyl-sn-glycerol + CoA. It carries out the reaction a long chain fatty alcohol + a fatty acyl-CoA = a wax ester + CoA. The protein operates within glycerolipid metabolism; triacylglycerol biosynthesis. Its pathway is lipid metabolism. Bifunctional wax ester synthase/diacylglycerol acyltransferase. Involved in cuticular wax biosynthesis. This Arabidopsis thaliana (Mouse-ear cress) protein is Wax ester synthase/diacylglycerol acyltransferase 9.